Reading from the N-terminus, the 902-residue chain is Calcium-activated chloride channel regulator 3A-1 (902 aa).

An N-terminal signal peptide occupies residues 1-21; it reads MVPGLQVLLFLTLHLLQNTES. Positions 45–199 are metalloprotease domain; the sequence is DERLIPSIKE…RITGTNVVHN (155 aa). A glycan (N-linked (GlcNAc...) asparagine) is linked at asparagine 75. Zn(2+) is bound at residue histidine 155. Residue glutamate 156 is part of the active site. Zn(2+)-binding residues include histidine 159 and aspartate 166. The region spanning 308–476 is the VWFA domain; that stretch reads VVCLVLDKSG…NSLIDAFSRI (169 aa). N-linked (GlcNAc...) asparagine glycosylation is found at asparagine 504, asparagine 515, asparagine 630, asparagine 687, asparagine 697, asparagine 809, and asparagine 814.

This sequence belongs to the CLCR family. As to quaternary structure, part of a complex composed of complement component C3, CLCA1/CLCA3, A2ML1/OH and ALB/serum albumin. Glycosylated. Post-translationally, the 130-kDa product is autoproteolytically processed by the metalloprotease domain and yields two subunits, a 90-kDa protein and a group of 32- to 38-kDa proteins. The cleavage is necessary for calcium-activated chloride channel (CaCC) activation activity. As to expression, highly expressed in skin and spleen, and at lower levels in kidney and liver. Also detected in lung and brain. Not detected in lung or brain. In lung, localizes to respiratory epithelia of the bronchi and trachea and the submucosal glands.

The protein localises to the cell membrane. In terms of biological role, plays a role in modulating chloride current across the plasma membrane in a calcium-dependent manner. This is Calcium-activated chloride channel regulator 3A-1 from Mus musculus (Mouse).